The following is a 352-amino-acid chain: Aspartic protease Bla g 2 (352 aa).

Positions 1–19 (MIGLKLVTVLFAVATITHA) are cleaved as a signal peptide. A propeptide spans 20–24 (AELQR) (removed in mature form). Residues 39-346 (YAGITKIGNQ…NWENKTMGFG (308 aa)) enclose the Peptidase A1 domain. D55 is an active-site residue. 3 cysteine pairs are disulfide-bonded: C59–C151, C68–C73, and C75–C136. A glycan (N-linked (GlcNAc...) asparagine) is linked at N117. 2 residues coordinate Zn(2+): H178 and H186. The active site involves D239. Disulfide bonds link C261-C272 and C276-C309. N-linked (GlcNAc...) asparagine glycosylation occurs at N295. 2 residues coordinate Zn(2+): D326 and D330. Residue N340 is glycosylated (N-linked (GlcNAc...) asparagine).

It belongs to the peptidase A1 family. Homodimer.

Functionally, functions as a digestive enzyme in the cockroach. This chain is Aspartic protease Bla g 2, found in Blattella germanica (German cockroach).